Reading from the N-terminus, the 789-residue chain is Ent-kaurene synthase TSP4, chloroplastic (789 aa).

Mg(2+) contacts are provided by D540 and D544. The DDXXD motif motif lies at 540-544; the sequence is DDFFD. Residues 638 to 656 form a helical membrane-spanning segment; that stretch reads AYVSFALGPIVLPALYLVG. Mg(2+) contacts are provided by N684, R687, and E692.

It belongs to the terpene synthase family. Requires Mg(2+) as cofactor. In terms of tissue distribution, expressed in leaves and fruits, including trichomes.

The protein resides in the plastid. It localises to the chloroplast membrane. The catalysed reaction is ent-copalyl diphosphate = ent-kaur-16-ene + diphosphate. It functions in the pathway plant hormone biosynthesis; gibberellin biosynthesis. Involved in the biosynthesis of labdane-type diterpenoid including cleroda-dienols, and peregrinol lactones and furan derivatives, dopaminergic diterpenoids that can bind to dopamine receptors in the human pituitary gland, have probably ability to lower prolactin levels, and are used to treat menstrual cycle disorders (e.g. premenstrual syndrome and mastodynia). Terpene synthase that produces ent-kaurene from ent-copalyl diphosphate. This Vitex agnus-castus (Chaste tree) protein is Ent-kaurene synthase TSP4, chloroplastic.